The chain runs to 393 residues: tRNA(Met) cytidine acetate ligase (393 aa).

ATP is bound by residues G81, N142, and R167.

It belongs to the TmcAL family.

It is found in the cytoplasm. The catalysed reaction is cytidine(34) in elongator tRNA(Met) + acetate + ATP = N(4)-acetylcytidine(34) in elongator tRNA(Met) + AMP + diphosphate. Catalyzes the formation of N(4)-acetylcytidine (ac(4)C) at the wobble position of elongator tRNA(Met), using acetate and ATP as substrates. First activates an acetate ion to form acetyladenylate (Ac-AMP) and then transfers the acetyl group to tRNA to form ac(4)C34. This Bacillus cereus (strain ATCC 14579 / DSM 31 / CCUG 7414 / JCM 2152 / NBRC 15305 / NCIMB 9373 / NCTC 2599 / NRRL B-3711) protein is tRNA(Met) cytidine acetate ligase.